The primary structure comprises 358 residues: DnaJ homolog subfamily C member 18 (358 aa).

The J domain maps to 82 to 146 (NYYEILGVSR…DKRLRYDEYG (65 aa)). Residues 228-248 (AFIQLLPVLVIVIISVITQLL) traverse the membrane as a helical segment.

The protein resides in the endoplasmic reticulum membrane. In Bos taurus (Bovine), this protein is DnaJ homolog subfamily C member 18 (DNAJC18).